The sequence spans 283 residues: Mau operon transcriptional activator (283 aa).

Positions Met1–Thr58 constitute an HTH lysR-type domain. Residues Phe18–Ala37 constitute a DNA-binding region (H-T-H motif).

The protein belongs to the LysR transcriptional regulatory family.

Functionally, transcriptional activator of the mau genes involved in methylamine metabolism. The chain is Mau operon transcriptional activator (mauR) from Paracoccus denitrificans.